A 77-amino-acid chain; its full sequence is MAVGTTPGELRELTDDELKDKLRESKEELFNLRFQMATGQLSNNRRLRTVRQEIARVYTVLRERELGLASGPAGEES.

The protein belongs to the universal ribosomal protein uL29 family.

In Mycolicibacterium smegmatis (strain ATCC 700084 / mc(2)155) (Mycobacterium smegmatis), this protein is Large ribosomal subunit protein uL29.